A 43-amino-acid chain; its full sequence is Protein PsbN (43 aa).

The chain crosses the membrane as a helical span at residues 5–27; sequence TLVTISISCLLVSFTGYAIYTSF.

It belongs to the PsbN family.

It localises to the plastid. The protein localises to the chloroplast thylakoid membrane. Its function is as follows. May play a role in photosystem I and II biogenesis. In Welwitschia mirabilis (Tree tumbo), this protein is Protein PsbN.